The following is a 435-amino-acid chain: Shikimate O-hydroxycinnamoyltransferase (435 aa).

Catalysis depends on proton acceptor residues His153 and Asp382.

It belongs to the plant acyltransferase family. Highly expressed in stem vascular tissues.

The catalysed reaction is shikimate + 4-coumaroyl-CoA = trans-4-coumaroylshikimate + CoA. Functionally, acyltransferase involved in the biosynthesis of lignin. The affinity for shikimate as acceptor is 100-fold higher than for quinate. The most efficient donors are caffeoyl-CoA &gt; p-coumaroyl-CoA &gt; feruloyl-CoA &gt;&gt; sinapoyl-CoA. The chain is Shikimate O-hydroxycinnamoyltransferase (HST) from Nicotiana tabacum (Common tobacco).